We begin with the raw amino-acid sequence, 328 residues long: uncharacterized protein (328 aa).

2 coiled-coil regions span residues 67 to 190 (FKEQ…VLEE) and 223 to 251 (MAQR…DNMM).

This is an uncharacterized protein from Mus musculus (Mouse).